The following is a 500-amino-acid chain: UDP-N-acetylmuramoyl-L-alanyl-D-glutamate--2,6-diaminopimelate ligase (500 aa).

UDP-N-acetyl-alpha-D-muramoyl-L-alanyl-D-glutamate is bound by residues Leu-26, Ser-28, and His-43–Val-45. Gly-123 to Thr-129 contributes to the ATP binding site. Residues Asn-164, Thr-165–Thr-166, Ser-192, Gln-198, and Arg-200 each bind UDP-N-acetyl-alpha-D-muramoyl-L-alanyl-D-glutamate. An N6-carboxylysine modification is found at Lys-232. Meso-2,6-diaminopimelate contacts are provided by residues Arg-399, Asp-423–Arg-426, Gly-474, and Glu-478. The Meso-diaminopimelate recognition motif motif lies at Asp-423 to Arg-426.

This sequence belongs to the MurCDEF family. MurE subfamily. Mg(2+) serves as cofactor. Carboxylation is probably crucial for Mg(2+) binding and, consequently, for the gamma-phosphate positioning of ATP.

It is found in the cytoplasm. The enzyme catalyses UDP-N-acetyl-alpha-D-muramoyl-L-alanyl-D-glutamate + meso-2,6-diaminopimelate + ATP = UDP-N-acetyl-alpha-D-muramoyl-L-alanyl-gamma-D-glutamyl-meso-2,6-diaminopimelate + ADP + phosphate + H(+). It participates in cell wall biogenesis; peptidoglycan biosynthesis. Catalyzes the addition of meso-diaminopimelic acid to the nucleotide precursor UDP-N-acetylmuramoyl-L-alanyl-D-glutamate (UMAG) in the biosynthesis of bacterial cell-wall peptidoglycan. In Actinobacillus pleuropneumoniae serotype 5b (strain L20), this protein is UDP-N-acetylmuramoyl-L-alanyl-D-glutamate--2,6-diaminopimelate ligase.